Here is a 206-residue protein sequence, read N- to C-terminus: Ribosomal RNA small subunit methyltransferase G (206 aa).

S-adenosyl-L-methionine contacts are provided by residues Gly-74, Leu-79, 125–126, and Arg-140; that span reads VE.

Belongs to the methyltransferase superfamily. RNA methyltransferase RsmG family.

The protein resides in the cytoplasm. The catalysed reaction is guanosine(527) in 16S rRNA + S-adenosyl-L-methionine = N(7)-methylguanosine(527) in 16S rRNA + S-adenosyl-L-homocysteine. Specifically methylates the N7 position of guanine in position 527 of 16S rRNA. This chain is Ribosomal RNA small subunit methyltransferase G, found in Shewanella sp. (strain ANA-3).